Consider the following 187-residue polypeptide: dITP/XTP pyrophosphatase (187 aa).

7–12 (TGNKHK) is a binding site for substrate. Mg(2+) contacts are provided by Glu36 and Asp64. The active-site Proton acceptor is the Asp64. Residues Ala65, 140–143 (FAFD), Lys163, and 168–169 (HR) each bind substrate.

It belongs to the HAM1 NTPase family. Homodimer. Mg(2+) serves as cofactor.

It catalyses the reaction XTP + H2O = XMP + diphosphate + H(+). The catalysed reaction is dITP + H2O = dIMP + diphosphate + H(+). The enzyme catalyses ITP + H2O = IMP + diphosphate + H(+). Functionally, pyrophosphatase that catalyzes the hydrolysis of nucleoside triphosphates to their monophosphate derivatives, with a high preference for the non-canonical purine nucleotides XTP (xanthosine triphosphate), dITP (deoxyinosine triphosphate) and ITP. Seems to function as a house-cleaning enzyme that removes non-canonical purine nucleotides from the nucleotide pool, thus preventing their incorporation into DNA/RNA and avoiding chromosomal lesions. This Methanothermobacter marburgensis (strain ATCC BAA-927 / DSM 2133 / JCM 14651 / NBRC 100331 / OCM 82 / Marburg) (Methanobacterium thermoautotrophicum) protein is dITP/XTP pyrophosphatase.